Consider the following 403-residue polypeptide: Argininosuccinate synthase (403 aa).

Residues 10-18 (AYSGGLDTS) and alanine 37 contribute to the ATP site. Tyrosine 89 is an L-citrulline binding site. Position 119 (glycine 119) interacts with ATP. Threonine 121, asparagine 125, and aspartate 126 together coordinate L-aspartate. Asparagine 125 is an L-citrulline binding site. Residues arginine 129, serine 178, serine 187, glutamate 263, and tyrosine 275 each contribute to the L-citrulline site.

Belongs to the argininosuccinate synthase family. Type 1 subfamily. In terms of assembly, homotetramer.

The protein resides in the cytoplasm. The enzyme catalyses L-citrulline + L-aspartate + ATP = 2-(N(omega)-L-arginino)succinate + AMP + diphosphate + H(+). Its pathway is amino-acid biosynthesis; L-arginine biosynthesis; L-arginine from L-ornithine and carbamoyl phosphate: step 2/3. This is Argininosuccinate synthase from Idiomarina loihiensis (strain ATCC BAA-735 / DSM 15497 / L2-TR).